Reading from the N-terminus, the 689-residue chain is Glycine--tRNA ligase beta subunit (689 aa).

Belongs to the class-II aminoacyl-tRNA synthetase family. In terms of assembly, tetramer of two alpha and two beta subunits.

The protein localises to the cytoplasm. The enzyme catalyses tRNA(Gly) + glycine + ATP = glycyl-tRNA(Gly) + AMP + diphosphate. The sequence is that of Glycine--tRNA ligase beta subunit from Actinobacillus succinogenes (strain ATCC 55618 / DSM 22257 / CCUG 43843 / 130Z).